An 853-amino-acid polypeptide reads, in one-letter code: Cytochrome P450 monooxygenase mpaDE (853 aa).

The Lumenal segment spans residues 1 to 6 (MKSLSL). The helical transmembrane segment at 7–29 (TWITAVAVVLYLVQRYVRSYWRL) threads the bilayer. The Cytoplasmic segment spans residues 30–853 (KDIPGPVLAK…DIENSIEGQK (824 aa)). Cys-449 contacts heme.

Belongs to the cytochrome P450 family. It depends on heme as a cofactor.

Its subcellular location is the endoplasmic reticulum membrane. The catalysed reaction is 5-methylorsellinate + reduced [NADPH--hemoprotein reductase] + O2 = 4,6-dihydroxy-2-(hydroxymethyl)-3-methylbenzoate + oxidized [NADPH--hemoprotein reductase] + H2O + H(+). The enzyme catalyses 4,6-dihydroxy-2-(hydroxymethyl)-3-methylbenzoate + H(+) = 5,7-dihydroxy-4-methylphthalide + H2O. The protein operates within secondary metabolite biosynthesis; terpenoid biosynthesis. In terms of biological role, cytochrome P450 monooxygenase; part of the gene cluster that mediates the biosynthesis of mycophenolic acid (MPA), the first isolated antibiotic natural product in the world obtained from a culture of Penicillium brevicompactum in 1893. MpaDE is an endoplasmic reticulum-bound enzyme that catalyzes the conversion of 5-methylorsellinic acid (5MOA) into the phthalide compound 5,7-dihydroxy-4,6-dimethylphthalide (DHMP). MpaDE first catalyzes hydroxylation of 5-MOA to 4,6-dihydroxy-2-(hydroxymethyl)-3-methylbenzoic acid (DHMB), and then acts as a lactone synthase that catalyzes the ring closure to convert DHMB into DHMP. The first step of the pathway is the synthesis of 5-methylorsellinic acid (5MOA) by the cytosolic polyketide synthase mpaC. 5MOA is then converted to the phthalide compound 5,7-dihydroxy-4,6-dimethylphthalide (DHMP) by the endoplasmic reticulum-bound cytochrome P450 monooxygenase mpaDE. MpaDE first catalyzes hydroxylation of 5-MOA to 4,6-dihydroxy-2-(hydroxymethyl)-3-methylbenzoic acid (DHMB). MpaDE then acts as a lactone synthase that catalyzes the ring closure to convert DHMB into DHMP. The next step is the prenylation of DHMP by the Golgi apparatus-associated prenyltransferase mpaA to yield farnesyl-DHMP (FDHMP). The ER-bound oxygenase mpaB then mediates the oxidative cleavage the C19-C20 double bond in FDHMP to yield FDHMP-3C via a mycophenolic aldehyde intermediate. The O-methyltransferase mpaG catalyzes the methylation of FDHMP-3C to yield MFDHMP-3C. After the cytosolic methylation of FDHMP-3C, MFDHMP-3C enters into peroxisomes probably via free diffusion due to its low molecular weight. Upon a peroxisomal CoA ligation reaction, catalyzed by a beta-oxidation component enzyme acyl-CoA ligase ACL891, MFDHMP-3C-CoA would then be restricted to peroxisomes for the following beta-oxidation pathway steps. The peroxisomal beta-oxidation machinery than converts MFDHMP-3C-CoA into MPA_CoA, via a beta-oxidation chain-shortening process. Finally mpaH acts as a peroxisomal acyl-CoA hydrolase with high substrate specificity toward MPA-CoA to release the final product MPA. This is Cytochrome P450 monooxygenase mpaDE from Penicillium brevicompactum.